The following is a 188-amino-acid chain: Elongation factor P-like protein (188 aa).

This sequence belongs to the elongation factor P family.

This is Elongation factor P-like protein from Marinobacter nauticus (strain ATCC 700491 / DSM 11845 / VT8) (Marinobacter aquaeolei).